Reading from the N-terminus, the 365-residue chain is Elongation factor Tu (365 aa).

GTP is bound by residues 1–7 (HVDHGKT), 62–66 (DCPGH), and 117–120 (NKCD). Residues 1–185 (HVDHGKTTLT…TLDSYIPTPE (185 aa)) form the tr-type G domain. Position 7 (T7) interacts with Mg(2+).

The protein belongs to the TRAFAC class translation factor GTPase superfamily. Classic translation factor GTPase family. EF-Tu/EF-1A subfamily. As to quaternary structure, monomer.

It is found in the cytoplasm. It catalyses the reaction GTP + H2O = GDP + phosphate + H(+). Its function is as follows. GTP hydrolase that promotes the GTP-dependent binding of aminoacyl-tRNA to the A-site of ribosomes during protein biosynthesis. This chain is Elongation factor Tu, found in Buchnera aphidicola subsp. Schlechtendalia chinensis.